A 1088-amino-acid polypeptide reads, in one-letter code: RNA-directed RNA polymerase (1088 aa).

Residues 501–687 (LSYGDVTRFL…AKRYIAGGKI (187 aa)) enclose the RdRp catalytic domain.

Belongs to the reoviridae RNA-directed RNA polymerase family. As to quaternary structure, interacts with VP3 (Potential). Interacts with VP2; this interaction activates VP1. Interacts with NSP5; this interaction is probably necessary for the formation of functional virus factories. Interacts with NSP2; this interaction is weak. Mg(2+) serves as cofactor.

The protein resides in the virion. It carries out the reaction RNA(n) + a ribonucleoside 5'-triphosphate = RNA(n+1) + diphosphate. In terms of biological role, RNA-directed RNA polymerase that is involved in both transcription and genome replication. Together with VP3 capping enzyme, forms an enzyme complex positioned near the channels situated at each of the five-fold vertices of the core. Following infection, the outermost layer of the virus is lost, leaving a double-layered particle (DLP) made up of the core and VP6 shell. VP1 then catalyzes the transcription of fully conservative plus-strand genomic RNAs that are extruded through the DLP's channels into the cytoplasm where they function as mRNAs for translation of viral proteins. One copy of each of the viral (+)RNAs is also recruited during core assembly, together with newly synthesized polymerase complexes and VP2. The polymerase of these novo-formed particles catalyzes the synthesis of complementary minus-strands leading to dsRNA formation. To do so, the polymerase specifically recognizes and binds 4 bases 5'-UGUG-3' in the conserved 3'-sequence of plus-strand RNA templates. VP2 presumably activates the autoinhibited VP1-RNA complex to coordinate packaging and genome replication. Once dsRNA synthesis is complete, the polymerase switches to the transcriptional mode, thus providing secondary transcription. This chain is RNA-directed RNA polymerase, found in Rotavirus A (strain RVA/Pig/United States/Gottfried/1983/G4P2B[6]) (RV-A).